Here is a 418-residue protein sequence, read N- to C-terminus: Lysophosphatidic acid phosphatase type 6 (418 aa).

The N-terminal 25 residues, 1–25 (MRVWVPVGVLTSLAYCFHQRRVALA), are a transit peptide targeting the mitochondrion. The tract at residues 51 to 161 (RHGARSPLKP…VFIRSTNMFR (111 aa)) is substrate binding. The active-site Nucleophile is His-52. Asp-327 acts as the Proton donor in catalysis.

Belongs to the histidine acid phosphatase family. In terms of assembly, monomer.

The protein resides in the mitochondrion. The catalysed reaction is a phosphate monoester + H2O = an alcohol + phosphate. It catalyses the reaction 1-(9Z-octadecenoyl)-sn-glycero-3-phosphate + H2O = 1-(9Z-octadecenoyl)-sn-glycerol + phosphate. Hydrolyzes lysophosphatidic acid (LPA) containing a medium length fatty acid chain to the corresponding monoacylglycerol. Has highest activity with lysophosphatidic acid containing myristate (C14:0), monounsaturated oleate (C18:1) or palmitate (C16:0), and lower activity with C18:0 and C6:0 lysophosphatidic acid. This chain is Lysophosphatidic acid phosphatase type 6 (Acp6), found in Mus musculus (Mouse).